Consider the following 309-residue polypeptide: Ribosomal RNA small subunit methyltransferase H (309 aa).

S-adenosyl-L-methionine contacts are provided by residues 33–35 (GGH), aspartate 53, phenylalanine 79, aspartate 100, and glutamine 107.

This sequence belongs to the methyltransferase superfamily. RsmH family.

It is found in the cytoplasm. It catalyses the reaction cytidine(1402) in 16S rRNA + S-adenosyl-L-methionine = N(4)-methylcytidine(1402) in 16S rRNA + S-adenosyl-L-homocysteine + H(+). Its function is as follows. Specifically methylates the N4 position of cytidine in position 1402 (C1402) of 16S rRNA. This is Ribosomal RNA small subunit methyltransferase H from Clostridium botulinum (strain Okra / Type B1).